Here is a 285-residue protein sequence, read N- to C-terminus: MFLLYRRLPSFARTTTTTLLCKSMEPAITATSSSSFGGGSSRLAALAQQLRQYKPPPSSSFDDSEEMQTDQETAGKVVSQVGFQESIAPLSKDPDRFKPKRAAVLICLFEGDDGDLRVILTKRSSKLSTHSGEVSLPGGKAEEDDKDDGMTATREAEEEIGLDPSLVDVVTSLEPFLSKHLLRVIPVIGILRDKNKFNPIPNPGEVEAVFDAPLEMFLKDENRRSEEREWMGEKYLIHYFDYRTGDKDYMIWGLTAGILIRAASVTYERPPAFIEQCPKFKYPKM.

Residues 1–23 (MFLLYRRLPSFARTTTTTLLCKS) constitute a mitochondrion transit peptide. Position 24 is an N-acetylmethionine (Met24). Disordered regions lie at residues 51–72 (RQYK…TDQE) and 129–152 (THSG…GMTA). The 157-residue stretch at 99 to 255 (PKRAAVLICL…DKDYMIWGLT (157 aa)) folds into the Nudix hydrolase domain. The short motif at 140-161 (KAEEDDKDDGMTATREAEEEIG) is the Nudix box element. Residues Glu155 and Glu159 each coordinate Mg(2+).

It belongs to the Nudix hydrolase family. Requires Mg(2+) as cofactor. Mn(2+) is required as a cofactor. In terms of tissue distribution, expressed in roots, leaves, stems and inflorescences.

The protein resides in the mitochondrion. In terms of biological role, coenzyme A diphosphatase which mediates the cleavage of oxidized CoA. Can use malonyl-CoA, hexanoyl-CoA, lauroyl-CoA, myristoyl-CoA and palmitoyl-CoA as substrates, but not isobutyryl-CoA or propionyl-CoA. In Arabidopsis thaliana (Mouse-ear cress), this protein is Nudix hydrolase 15, mitochondrial (NUDT15).